A 430-amino-acid chain; its full sequence is Enolase (430 aa).

Q163 is a (2R)-2-phosphoglycerate binding site. The active-site Proton donor is the E205. Residues D242, E288, and D315 each coordinate Mg(2+). 4 residues coordinate (2R)-2-phosphoglycerate: K340, R369, S370, and K391. K340 functions as the Proton acceptor in the catalytic mechanism.

It belongs to the enolase family. It depends on Mg(2+) as a cofactor.

It localises to the cytoplasm. The protein resides in the secreted. The protein localises to the cell surface. It carries out the reaction (2R)-2-phosphoglycerate = phosphoenolpyruvate + H2O. It participates in carbohydrate degradation; glycolysis; pyruvate from D-glyceraldehyde 3-phosphate: step 4/5. Its function is as follows. Catalyzes the reversible conversion of 2-phosphoglycerate (2-PG) into phosphoenolpyruvate (PEP). It is essential for the degradation of carbohydrates via glycolysis. The protein is Enolase of Aster yellows witches'-broom phytoplasma (strain AYWB).